The primary structure comprises 336 residues: Potassium channel subfamily K member 1 (336 aa).

Topologically, residues 1 to 20 (MLQSLAGSSCVRLVERHRSA) are cytoplasmic. Residues 21-41 (WCFGFLVLGYLLYLVFGAVVF) form a helical membrane-spanning segment. The Extracellular segment spans residues 42-103 (SSVELPYEDL…SNASGNWNWD (62 aa)). Residue Asn95 is glycosylated (N-linked (GlcNAc...) asparagine). The helical intramembrane region spans 104–116 (FTSALFFASTVLS). An intramembrane segment occupies 117-122 (TTGYGH). A selectivity filter 1 region spans residues 117 to 122 (TTGYGH). At 123–132 (TVPLSDGGKA) the chain is on the extracellular side. A helical transmembrane segment spans residues 133–156 (FCIIYSVIGIPFTLLFLTAVVQRI). The Cytoplasmic segment spans residues 157-181 (TVHVTRRPVLYFHIRWGFSKQVVAI). A helical membrane pass occupies residues 182-202 (VHAVLLGFVTVSCFFFIPAAV). Residues 203–211 (FSVLEDDWN) lie on the Extracellular side of the membrane. Positions 212–224 (FLESFYFCFISLS) form an intramembrane region, helical. Positions 225–230 (TIGLGD) are selectivity filter 2. An intramembrane segment occupies 225 to 231 (TIGLGDY). Residues 232–243 (VPGEGYNQKFRE) are Extracellular-facing. Residues 244–267 (LYKIGITCYLLLGLIAMLVVLETF) traverse the membrane as a helical segment. Topologically, residues 268 to 336 (CELHELKKFR…SACVDGPANH (69 aa)) are cytoplasmic. A Glycyl lysine isopeptide (Lys-Gly) (interchain with G-Cter in SUMO) cross-link involves residue Lys274. An important for intracellular retention in recycling endosomes region spans residues 293–299 (IIEHDQL). Residue Ser326 is modified to Phosphoserine.

This sequence belongs to the two pore domain potassium channel (TC 1.A.1.8) family. In terms of assembly, homodimer; disulfide-linked. Heterodimer with KCNK2; disulfide-linked. In astrocytes, forms mostly heterodimeric potassium channels with KCNK2, with only a minor proportion of functional channels containing homodimeric KCNK1. Interacts with KCNK3 and KCNK9, forming functional heterodimeric channels. Interacts with GNG4. Identified in a complex with PSD and ARF6; interacts only with PSD that is bound to ARF6. Interacts with UBE2I. In terms of processing, sumoylation is controversial. Sumoylated by UBE2I. Not sumoylated when expressed in xenopus oocytes or mammalian cells. Sumoylation inactivates the channel, but does not interfere with expression at the cell membrane. Sumoylation of a single subunit is sufficient to silence the dimeric channel. Sumoylation of KCNK1 is sufficient to silence heterodimeric channels formed by KCNK1 and KCNK3 or KCNK9. Desumoylated by SENP1; this activates the channel. Desumoylated by SENP1; this strongly increases halothane-mediated activation of heterodimeric channels formed with KCNK9. SENP1 treatment has no effect. Detected in bronchial epithelial cells. Detected in heart left atrium and left ventricle. Detected in cardiac myocytes (at protein level). Widely expressed with high levels in heart, brain and kidney, and lower levels in colon, ovary, placenta, lung and liver. Highly expressed in cerebellum, and detected at lower levels in amygdala, caudate nucleus, brain cortex, hippocampus, putamen, substantia nigra, thalamus, dorsal root ganglion, spinal cord, pituitary, heart, kidney, lung, placenta, pancreas, stomach, small intestine, uterus and prostate. Detected in right and left heart ventricle and atrium, and in heart Purkinje fibers.

The protein resides in the cell membrane. The protein localises to the recycling endosome. It localises to the synaptic cell membrane. Its subcellular location is the cytoplasmic vesicle. It is found in the perikaryon. The protein resides in the cell projection. The protein localises to the dendrite. It localises to the apical cell membrane. It carries out the reaction K(+)(in) = K(+)(out). It catalyses the reaction NH4(+)(in) = NH4(+)(out). The enzyme catalyses Na(+)(in) = Na(+)(out). The catalysed reaction is Rb(+)(in) = Rb(+)(out). It carries out the reaction Cs(+)(in) = Cs(+)(out). It catalyses the reaction Li(+)(in) = Li(+)(out). The enzyme catalyses L-glutamate(out) = L-glutamate(in). The catalysed reaction is chloride(in) = chloride(out). Inhibited by Ba(2+) ions and quinidine. Inhibited by quinine. Is slightly inhibited by 10 mM tetraethylammonium (TEA), and only marginally inhibited by 4-aminopyridine, charybdotoxin and dendrotoxin. Lowering the extracellular pH to below 6.5 transiently activates the channel, and then inhibits channel activity. Inhibited when the intracellular pH is decreased down to pH 6.0, but this may be due to indirect effects. Its function is as follows. Ion channel that contributes to passive transmembrane potassium transport and to the regulation of the resting membrane potential in brain astrocytes, but also in kidney and in other tissues. Forms dimeric channels through which potassium ions pass in accordance with their electrochemical gradient. The channel is selective for K(+) ions at physiological potassium concentrations and at neutral pH, but becomes permeable to Na(+) at subphysiological K(+) levels and upon acidification of the extracellular medium. The homodimer has very low potassium channel activity, when expressed in heterologous systems, and can function as weakly inward rectifying potassium channel. Channel activity is modulated by activation of serotonin receptors. Heterodimeric channels containing KCNK1 and KCNK2 have much higher activity, and may represent the predominant form in astrocytes. Heterodimeric channels containing KCNK1 and KCNK3 or KCNK9 have much higher activity. Heterodimeric channels formed by KCNK1 and KCNK9 may contribute to halothane-sensitive currents. Mediates outward rectifying potassium currents in dentate gyrus granule cells and contributes to the regulation of their resting membrane potential. Contributes to the regulation of action potential firing in dentate gyrus granule cells and down-regulates their intrinsic excitability. In astrocytes, the heterodimer formed by KCNK1 and KCNK2 is required for rapid glutamate release in response to activation of G-protein coupled receptors, such as F2R and CNR1. Required for normal ion and water transport in the kidney. Contributes to the regulation of the resting membrane potential of pancreatic beta cells. The low channel activity of homodimeric KCNK1 may be due to sumoylation. The low channel activity may be due to rapid internalization from the cell membrane and retention in recycling endosomes. Permeable to monovalent cations with ion selectivity for K(+) &gt; Rb(+) &gt;&gt; NH4(+) &gt;&gt; Cs(+) = Na(+) = Li(+). This chain is Potassium channel subfamily K member 1 (KCNK1), found in Homo sapiens (Human).